Here is a 298-residue protein sequence, read N- to C-terminus: ATP phosphoribosyltransferase (298 aa).

It belongs to the ATP phosphoribosyltransferase family.

The protein localises to the cytoplasm. The enzyme catalyses 1-(5-phospho-beta-D-ribosyl)-ATP + diphosphate = 5-phospho-alpha-D-ribose 1-diphosphate + ATP. The protein operates within amino-acid biosynthesis; L-histidine biosynthesis; L-histidine from 5-phospho-alpha-D-ribose 1-diphosphate: step 1/9. Functionally, catalyzes the condensation of ATP and 5-phosphoribose 1-diphosphate to form N'-(5'-phosphoribosyl)-ATP (PR-ATP). Has a crucial role in the pathway because the rate of histidine biosynthesis seems to be controlled primarily by regulation of the enzymatic activity. This is ATP phosphoribosyltransferase (HIS1) from Candida albicans (strain SC5314 / ATCC MYA-2876) (Yeast).